The chain runs to 326 residues: Transcription factor WRKY45-1 (326 aa).

Disordered stretches follow at residues 67–114 (GGEG…SVVV) and 252–288 (GVGSSDQEEVLSSLTPGSSAARGGGGGGGVAGPFGPD). A DNA-binding region (WRKY) is located at residues 112–180 (VVVKNLDDGQ…YIGEHTCRDP (69 aa)). Over residues 273 to 283 (RGGGGGGGVAG) the composition is skewed to gly residues.

The protein belongs to the WRKY group III family. Expressed in aleurone cells.

The protein localises to the nucleus. Functionally, transcriptional activator involved in defense responses against pathogens. Acts as a positive regulator of defense responses against the rice blast fungus Magnaporthe oryzae. Acts through W-boxes, which are cis-elements that are enriched in the promoters of several defense-related genes. Plays an important role in the benzothiadiazole-induced disease resistance by mediating salicylic acid (SA) defense signaling pathway, independently of the disease resistance gene NPR1/NH1. Acts as a negative regulator of defense responses against the bacterial blight Xanthomonas oryzae pv oryzae (Xoo) and the bacterial streak Xanthomonas oryzae pv oryzicola (Xoc). Acts downstream of abscisic acid (ABA) signaling in response to the rice blast fungus. ABA is a negative regulator of defense responses that interacts antagonistically with salicylic acid (SA) signaling pathway. Acts as a negative regulator of ABA signaling that suppresses growth of seedlings. Does not seem to be involved in the regulation of salt stress response. Acts as a negative regulator of cold stress response. Acts as a negative regulator of drought stress response. The sequence is that of Transcription factor WRKY45-1 from Oryza sativa subsp. japonica (Rice).